We begin with the raw amino-acid sequence, 87 residues long: UPF0386 protein RSKD131_0371 (87 aa).

Belongs to the UPF0386 family.

This is UPF0386 protein RSKD131_0371 from Cereibacter sphaeroides (strain KD131 / KCTC 12085) (Rhodobacter sphaeroides).